The following is a 517-amino-acid chain: Protein MGF 505-2R (517 aa).

Belongs to the asfivirus MGF 505 family.

Its function is as follows. Plays a role in virus cell tropism, and may be required for efficient virus replication in macrophages. This African swine fever virus (isolate Warthog/Namibia/Wart80/1980) (ASFV) protein is Protein MGF 505-2R.